We begin with the raw amino-acid sequence, 377 residues long: Beta sliding clamp (377 aa).

The protein belongs to the beta sliding clamp family. As to quaternary structure, forms a ring-shaped head-to-tail homodimer around DNA which binds and tethers DNA polymerases and other proteins to the DNA. The DNA replisome complex has a single clamp-loading complex (3 tau and 1 each of delta, delta', psi and chi subunits) which binds 3 Pol III cores (1 core on the leading strand and 2 on the lagging strand) each with a beta sliding clamp dimer. Additional proteins in the replisome are other copies of gamma, psi and chi, Ssb, DNA helicase and RNA primase.

It localises to the cytoplasm. Functionally, confers DNA tethering and processivity to DNA polymerases and other proteins. Acts as a clamp, forming a ring around DNA (a reaction catalyzed by the clamp-loading complex) which diffuses in an ATP-independent manner freely and bidirectionally along dsDNA. Initially characterized for its ability to contact the catalytic subunit of DNA polymerase III (Pol III), a complex, multichain enzyme responsible for most of the replicative synthesis in bacteria; Pol III exhibits 3'-5' exonuclease proofreading activity. The beta chain is required for initiation of replication as well as for processivity of DNA replication. The sequence is that of Beta sliding clamp (dnaN) from Staphylococcus epidermidis (strain ATCC 35984 / DSM 28319 / BCRC 17069 / CCUG 31568 / BM 3577 / RP62A).